Consider the following 1060-residue polypeptide: Isoleucine--tRNA ligase (1060 aa).

The short motif at 55-65 (PTANGTPGVHH) is the 'HIGH' region element. The 'KMSKS' region motif lies at 608 to 612 (KMSKH). Lys-611 contacts ATP.

This sequence belongs to the class-I aminoacyl-tRNA synthetase family. IleS type 2 subfamily. As to quaternary structure, monomer. The cofactor is Zn(2+).

It localises to the cytoplasm. The catalysed reaction is tRNA(Ile) + L-isoleucine + ATP = L-isoleucyl-tRNA(Ile) + AMP + diphosphate. Functionally, catalyzes the attachment of isoleucine to tRNA(Ile). As IleRS can inadvertently accommodate and process structurally similar amino acids such as valine, to avoid such errors it has two additional distinct tRNA(Ile)-dependent editing activities. One activity is designated as 'pretransfer' editing and involves the hydrolysis of activated Val-AMP. The other activity is designated 'posttransfer' editing and involves deacylation of mischarged Val-tRNA(Ile). This chain is Isoleucine--tRNA ligase, found in Thermobifida fusca (strain YX).